A 141-amino-acid polypeptide reads, in one-letter code: Large ribosomal subunit protein uL11 (141 aa).

The protein belongs to the universal ribosomal protein uL11 family. As to quaternary structure, part of the ribosomal stalk of the 50S ribosomal subunit. Interacts with L10 and the large rRNA to form the base of the stalk. L10 forms an elongated spine to which L12 dimers bind in a sequential fashion forming a multimeric L10(L12)X complex. In terms of processing, one or more lysine residues are methylated.

Functionally, forms part of the ribosomal stalk which helps the ribosome interact with GTP-bound translation factors. The protein is Large ribosomal subunit protein uL11 of Chlamydia trachomatis serovar L2 (strain ATCC VR-902B / DSM 19102 / 434/Bu).